Here is a 107-residue protein sequence, read N- to C-terminus: U-scoloptoxin(18)-Er1a (107 aa).

A signal peptide spans 1–21 (MQRFLCLVACSVVLLVLGIVA).

This sequence belongs to the scoloptoxin-18 family. In terms of processing, contains 5 disulfide bonds. In terms of tissue distribution, expressed by the venom gland.

The protein localises to the secreted. In Ethmostigmus rubripes (Giant centipede), this protein is U-scoloptoxin(18)-Er1a.